Reading from the N-terminus, the 379-residue chain is Ribosomal RNA small subunit methyltransferase H (379 aa).

Residues 71–73 (GGH), Glu-90, Asp-157, and His-164 each bind S-adenosyl-L-methionine.

The protein belongs to the methyltransferase superfamily. RsmH family.

It localises to the cytoplasm. The enzyme catalyses cytidine(1402) in 16S rRNA + S-adenosyl-L-methionine = N(4)-methylcytidine(1402) in 16S rRNA + S-adenosyl-L-homocysteine + H(+). Functionally, specifically methylates the N4 position of cytidine in position 1402 (C1402) of 16S rRNA. The chain is Ribosomal RNA small subunit methyltransferase H from Treponema pallidum (strain Nichols).